Consider the following 637-residue polypeptide: Biosynthetic arginine decarboxylase (637 aa).

Lys101 is modified (N6-(pyridoxal phosphate)lysine). Residue 286-296 participates in substrate binding; the sequence is FDVGGGLAVDY.

This sequence belongs to the Orn/Lys/Arg decarboxylase class-II family. SpeA subfamily. Requires Mg(2+) as cofactor. Pyridoxal 5'-phosphate serves as cofactor.

It catalyses the reaction L-arginine + H(+) = agmatine + CO2. It functions in the pathway amine and polyamine biosynthesis; agmatine biosynthesis; agmatine from L-arginine: step 1/1. Functionally, catalyzes the biosynthesis of agmatine from arginine. This chain is Biosynthetic arginine decarboxylase, found in Shewanella sp. (strain MR-7).